We begin with the raw amino-acid sequence, 310 residues long: Iron ABC transporter substrate-binding lipoprotein MtsA (310 aa).

A signal peptide spans 1–20 (MGKRMSLILGAFLSVFLLVA). Cysteine 21 carries N-palmitoyl cysteine lipidation. Cysteine 21 carries S-diacylglycerol cysteine lipidation. Positions 68, 140, 206, and 281 each coordinate Fe(2+).

The protein belongs to the bacterial solute-binding protein 9 family. Lipoprotein receptor antigen (Lrai) subfamily.

The protein localises to the cell membrane. Its function is as follows. Part of the ATP-binding cassette (ABC) transport system MtsABC involved in iron import. Binds iron with high affinity and specificity and delivers it to the membrane permease for translocation into the cytoplasm. Has low affinity for Zn(2+) and Cu(2+). The polypeptide is Iron ABC transporter substrate-binding lipoprotein MtsA (mtsA) (Streptococcus pyogenes serotype M1).